We begin with the raw amino-acid sequence, 45 residues long: Lysis protein for colicin E1 (45 aa).

An N-terminal signal peptide occupies residues 1–17; it reads MRKRFFVGIFAINLLVG. Cys18 carries N-palmitoyl cysteine lipidation. A lipid anchor (S-diacylglycerol cysteine) is attached at Cys18.

It localises to the cell outer membrane. Functionally, lysis proteins are required for both colicin release and partial cell lysis. This chain is Lysis protein for colicin E1 (lys), found in Escherichia coli.